Here is a 360-residue protein sequence, read N- to C-terminus: ELAV-like protein 2 (360 aa).

Residues 1-36 (METQLSNGPTCNNTANGPTTVNNNCSSPVDSGNTED) form a disordered region. RRM domains are found at residues 39–117 (TNLI…YARP) and 125–205 (ANLY…FANN). Serine 221 is modified (phosphoserine). The region spanning 277–355 (WCIFVYNLAP…RVLQVSFKTN (79 aa)) is the RRM 3 domain.

This sequence belongs to the RRM elav family. As to quaternary structure, interacts with IGF2BP1. Interacts with MAP1B light chain LC1. As to expression, brain; neural-specific. Expressed in the hippocampus.

Functionally, RNA-binding protein that binds to the 3' untranslated region (3'UTR) of target mRNAs. Seems to recognize a GAAA motif. Can bind to its own 3'UTR, the FOS 3'UTR and the ID 3'UTR. The polypeptide is ELAV-like protein 2 (Elavl2) (Mus musculus (Mouse)).